The following is a 280-amino-acid chain: tRNA dimethylallyltransferase (280 aa).

ATP is bound at residue 9-16 (GPTGSGKT). 11-16 (TGSGKT) lines the substrate pocket. An interaction with substrate tRNA region spans residues 34-37 (DSVS).

This sequence belongs to the IPP transferase family. In terms of assembly, monomer. It depends on Mg(2+) as a cofactor.

The enzyme catalyses adenosine(37) in tRNA + dimethylallyl diphosphate = N(6)-dimethylallyladenosine(37) in tRNA + diphosphate. Catalyzes the transfer of a dimethylallyl group onto the adenine at position 37 in tRNAs that read codons beginning with uridine, leading to the formation of N6-(dimethylallyl)adenosine (i(6)A). The protein is tRNA dimethylallyltransferase of Acholeplasma laidlawii (strain PG-8A).